We begin with the raw amino-acid sequence, 325 residues long: Small ribosomal subunit protein uS3 (325 aa).

The KH type-2 domain maps to 38-106; the sequence is IRKMMSKGME…QVQLNILEVK (69 aa). Positions 217-325 are disordered; that stretch reads EALLRQQRRE…AQGAPEKAEG (109 aa). The segment covering 222-232 has biased composition (basic residues); it reads QQRRERPRRGP. Positions 285 to 316 are enriched in low complexity; it reads TESAAVEGTPVETPAVTPETTAAPAAVTTAEA.

It belongs to the universal ribosomal protein uS3 family. As to quaternary structure, part of the 30S ribosomal subunit. Forms a tight complex with proteins S10 and S14.

Binds the lower part of the 30S subunit head. Binds mRNA in the 70S ribosome, positioning it for translation. In Parafrankia sp. (strain EAN1pec), this protein is Small ribosomal subunit protein uS3.